We begin with the raw amino-acid sequence, 779 residues long: Nucleolar complex protein 3 homolog (779 aa).

2 disordered regions span residues 1–20 (MGFASASREEKLKMMKTNKT) and 100–189 (NAKR…SHLS). The segment covering 114–124 (DSDEDEDEDDV) has biased composition (acidic residues). The segment covering 136–160 (EEGHEELLPIKLKDGTLIRPTREKE) has biased composition (basic and acidic residues). A compositionally biased stretch (acidic residues) spans 161 to 178 (VEEQEEEEKSDIDEGEED). A coiled-coil region spans residues 434–474 (AKKYQIKKERASKTAKKYKKQLARLEADLLEVEAEESLTKK).

This sequence belongs to the CBF/MAK21 family.

The protein resides in the nucleus. Its subcellular location is the nucleolus. The sequence is that of Nucleolar complex protein 3 homolog from Caenorhabditis briggsae.